The following is a 239-amino-acid chain: Wilms tumor protein homolog (239 aa).

Positions 43–51 match the 9aaTAD motif; sequence MTWNQMNLG. 3 C2H2-type zinc fingers span residues 113–137, 143–167, and 173–195; these read FMCAYPGCNKRYFKLSHLQMHSRKH, YQCDFKDCERRFSRSDQLKRHQRRH, and FQCKTCQRKFSRSDHLKTHTRTH. 2 important for interaction with target DNA regions span residues 157–171 and 183–191; these read SDQLKRHQRRHTGVK and SRSDHLKTH. The short motif at 198–200 is the KTS motif element; it reads KTS. The C2H2-type 4 zinc-finger motif lies at 204-228; that stretch reads FSCRWPSCQKKFARSDELVRHHNMH. Lys234 participates in a covalent cross-link: Glycyl lysine isopeptide (Lys-Gly) (interchain with G-Cter in SUMO2).

Belongs to the EGR C2H2-type zinc-finger protein family. Interacts with ZNF224 via the zinc-finger region. Interacts with WTAP, AMER1 and SRY. Homodimer. Interacts with WTIP. Interacts with actively translating polysomes. Detected in nuclear ribonucleoprotein (mRNP) particles. Interacts with U2AF2. Interacts with HNRNPU via the zinc-finger region. Interacts with CITED2.

The protein localises to the nucleus speckle. It is found in the nucleus. It localises to the nucleoplasm. Its subcellular location is the cytoplasm. Transcription factor that plays an important role in cellular development and cell survival. Recognizes and binds to the DNA sequence 5'-GCG(T/G)GGGCG-3'. Regulates the expression of numerous target genes, including EPO. Plays an essential role for development of the urogenital system. It has a tumor suppressor as well as an oncogenic role in tumor formation. Function may be isoform-specific: isoforms lacking the KTS motif may act as transcription factors. Isoforms containing the KTS motif may bind mRNA and play a role in mRNA metabolism or splicing. This is Wilms tumor protein homolog (WT1) from Sminthopsis macroura (Stripe-faced dunnart).